We begin with the raw amino-acid sequence, 342 residues long: Maltose regulon regulatory protein MalI (342 aa).

The 55-residue stretch at 7–61 (ITIHDVALAAGVSVSTVSLVLSGKGRISTATGERVNAAIEELGFVRNRQASALRG) folds into the HTH lacI-type domain. The H-T-H motif DNA-binding region spans 9–28 (IHDVALAAGVSVSTVSLVLS).

In terms of biological role, repressor for the malX and malY genes. Also regulates its own expression. Binds maltose as an inducer. The sequence is that of Maltose regulon regulatory protein MalI (malI) from Escherichia coli (strain K12).